We begin with the raw amino-acid sequence, 229 residues long: GTP cyclohydrolase 1 (229 aa).

A disordered region spans residues 1–31; that stretch reads MFRESDNTIAPSNQDLNKPVVDKEQPAERTP. The span at 7–16 shows a compositional bias: polar residues; sequence NTIAPSNQDL. C117, H120, and C188 together coordinate Zn(2+).

Belongs to the GTP cyclohydrolase I family. As to quaternary structure, toroid-shaped homodecamer, composed of two pentamers of five dimers.

It carries out the reaction GTP + H2O = 7,8-dihydroneopterin 3'-triphosphate + formate + H(+). It functions in the pathway cofactor biosynthesis; 7,8-dihydroneopterin triphosphate biosynthesis; 7,8-dihydroneopterin triphosphate from GTP: step 1/1. In Rhodopirellula baltica (strain DSM 10527 / NCIMB 13988 / SH1), this protein is GTP cyclohydrolase 1.